The following is a 512-amino-acid chain: Maturase K (512 aa).

This sequence belongs to the intron maturase 2 family. MatK subfamily.

The protein localises to the plastid. It is found in the chloroplast. Its function is as follows. Usually encoded in the trnK tRNA gene intron. Probably assists in splicing its own and other chloroplast group II introns. The polypeptide is Maturase K (Acer campestre (Field maple)).